Here is a 93-residue protein sequence, read N- to C-terminus: Translation initiation factor IF-1 (93 aa).

The S1-like domain occupies 1–72 (MAKEELIQFE…EKGRLIFRHK (72 aa)). The interval 70 to 93 (RHKDERPGGGPPRGAPPRGQFRRR) is disordered.

It belongs to the IF-1 family. In terms of assembly, component of the 30S ribosomal translation pre-initiation complex which assembles on the 30S ribosome in the order IF-2 and IF-3, IF-1 and N-formylmethionyl-tRNA(fMet); mRNA recruitment can occur at any time during PIC assembly.

It is found in the cytoplasm. Its function is as follows. One of the essential components for the initiation of protein synthesis. Stabilizes the binding of IF-2 and IF-3 on the 30S subunit to which N-formylmethionyl-tRNA(fMet) subsequently binds. Helps modulate mRNA selection, yielding the 30S pre-initiation complex (PIC). Upon addition of the 50S ribosomal subunit IF-1, IF-2 and IF-3 are released leaving the mature 70S translation initiation complex. The sequence is that of Translation initiation factor IF-1 from Rhodopseudomonas palustris (strain BisB18).